The chain runs to 68 residues: Conotoxin TsMMSK-021 (68 aa).

Positions 1 to 20 are cleaved as a signal peptide; it reads MMSKLGVLLTICLLLFPLTA. Positions 21–50 are excised as a propeptide; the sequence is VPLDGDQHADRPADRMQDISSEQHPLFDPV. Intrachain disulfides connect cysteine 53/cysteine 66, cysteine 54/cysteine 62, and cysteine 58/cysteine 65. Proline 64 is modified (4-hydroxyproline).

Belongs to the conotoxin M superfamily. Expressed by the venom duct.

It is found in the secreted. This chain is Conotoxin TsMMSK-021, found in Conus tessulatus (Tessellate cone).